The chain runs to 892 residues: Alanine--tRNA ligase (892 aa).

Zn(2+) contacts are provided by His-574, His-578, Cys-677, and His-681.

The protein belongs to the class-II aminoacyl-tRNA synthetase family. Zn(2+) serves as cofactor.

Its subcellular location is the cytoplasm. It catalyses the reaction tRNA(Ala) + L-alanine + ATP = L-alanyl-tRNA(Ala) + AMP + diphosphate. Its function is as follows. Catalyzes the attachment of alanine to tRNA(Ala) in a two-step reaction: alanine is first activated by ATP to form Ala-AMP and then transferred to the acceptor end of tRNA(Ala). Also edits incorrectly charged Ser-tRNA(Ala) and Gly-tRNA(Ala) via its editing domain. In Mesoplasma florum (strain ATCC 33453 / NBRC 100688 / NCTC 11704 / L1) (Acholeplasma florum), this protein is Alanine--tRNA ligase.